A 381-amino-acid chain; its full sequence is Succinyl-diaminopimelate desuccinylase (381 aa).

H70 is a binding site for Zn(2+). The active site involves D72. Residue D103 coordinates Zn(2+). E136 acts as the Proton acceptor in catalysis. E137, E165, and H354 together coordinate Zn(2+).

The protein belongs to the peptidase M20A family. DapE subfamily. As to quaternary structure, homodimer. It depends on Zn(2+) as a cofactor. The cofactor is Co(2+).

It catalyses the reaction N-succinyl-(2S,6S)-2,6-diaminopimelate + H2O = (2S,6S)-2,6-diaminopimelate + succinate. Its pathway is amino-acid biosynthesis; L-lysine biosynthesis via DAP pathway; LL-2,6-diaminopimelate from (S)-tetrahydrodipicolinate (succinylase route): step 3/3. Its function is as follows. Catalyzes the hydrolysis of N-succinyl-L,L-diaminopimelic acid (SDAP), forming succinate and LL-2,6-diaminopimelate (DAP), an intermediate involved in the bacterial biosynthesis of lysine and meso-diaminopimelic acid, an essential component of bacterial cell walls. The chain is Succinyl-diaminopimelate desuccinylase from Roseobacter denitrificans (strain ATCC 33942 / OCh 114) (Erythrobacter sp. (strain OCh 114)).